We begin with the raw amino-acid sequence, 130 residues long: Glycine cleavage system H protein (130 aa).

Residues 24 to 106 (EYTVGITEHA…YHEGWLFRIK (83 aa)) form the Lipoyl-binding domain. Lysine 65 bears the N6-lipoyllysine mark.

The protein belongs to the GcvH family. The glycine cleavage system is composed of four proteins: P, T, L and H. (R)-lipoate is required as a cofactor.

Functionally, the glycine cleavage system catalyzes the degradation of glycine. The H protein shuttles the methylamine group of glycine from the P protein to the T protein. In Photorhabdus laumondii subsp. laumondii (strain DSM 15139 / CIP 105565 / TT01) (Photorhabdus luminescens subsp. laumondii), this protein is Glycine cleavage system H protein.